The sequence spans 414 residues: Isocitrate dehydrogenase [NADP] cytoplasmic (414 aa).

S2 is modified (N-acetylserine). Position 42 is a phosphotyrosine (Y42). 75–77 (TIT) provides a ligand contact to NADP(+). T77 contacts substrate. The residue at position 81 (K81) is an N6-acetyllysine. NADP(+) is bound at residue R82. Residues 94 to 100 (SPNGTIR) and R109 contribute to the substrate site. K126 is subject to N6-succinyllysine. 2 residues coordinate substrate: R132 and K212. K224 and K233 each carry N6-acetyllysine. Residue D252 participates in Mn(2+) binding. K260 contacts NADP(+). Positions 275 and 279 each coordinate Mn(2+). 310 to 315 (GTVTRH) contacts NADP(+). K321 is modified (N6-acetyllysine). N328 contacts NADP(+). Residue S389 is modified to Phosphoserine. Residue K400 is modified to N6-succinyllysine.

It belongs to the isocitrate and isopropylmalate dehydrogenases family. In terms of assembly, homodimer. Mg(2+) serves as cofactor. The cofactor is Mn(2+). Post-translationally, acetylation at Lys-374 dramatically reduces catalytic activity. As to expression, expressed preferentially in corneal epithelium. Constitute approximately 13% of the total soluble bovine corneal epithelial proteins.

It localises to the cytoplasm. It is found in the cytosol. The catalysed reaction is D-threo-isocitrate + NADP(+) = 2-oxoglutarate + CO2 + NADPH. Catalyzes the NADP(+)-dependent oxidative decarboxylation of isocitrate (D-threo-isocitrate) to 2-ketoglutarate (2-oxoglutarate), which is required by other enzymes such as the phytanoyl-CoA dioxygenase. Plays a critical role in the generation of NADPH, an important cofactor in many biosynthesis pathways. May act as a corneal epithelial crystallin and may be involved in maintaining corneal epithelial transparency. The polypeptide is Isocitrate dehydrogenase [NADP] cytoplasmic (IDH1) (Bos taurus (Bovine)).